The following is a 147-amino-acid chain: Lysozyme C (147 aa).

The N-terminal stretch at 1–17 (MRSLLILVLCFLPLAAP) is a signal peptide. Positions 19 to 147 (KVYGRCELAA…VNVWIRGCRL (129 aa)) constitute a C-type lysozyme domain. Disulfide bonds link Cys-24-Cys-145, Cys-48-Cys-133, Cys-82-Cys-98, and Cys-94-Cys-112. Catalysis depends on residues Glu-53 and Asp-70.

The protein belongs to the glycosyl hydrolase 22 family. Monomer. In terms of processing, by an evolutionary shift in the site of proteolytic cleavage of prelysozyme, Gly-18 became the N-terminal residue of the mature protein instead of being the C-terminal residue of the signal sequence as in other birds.

The protein localises to the secreted. The enzyme catalyses Hydrolysis of (1-&gt;4)-beta-linkages between N-acetylmuramic acid and N-acetyl-D-glucosamine residues in a peptidoglycan and between N-acetyl-D-glucosamine residues in chitodextrins.. In terms of biological role, lysozymes have primarily a bacteriolytic function; those in tissues and body fluids are associated with the monocyte-macrophage system and enhance the activity of immunoagents. This is Lysozyme C (LYZ) from Phasianus colchicus colchicus (Black-necked pheasant).